The chain runs to 161 residues: Allophycocyanin subunit alpha 1 (161 aa).

N71 carries the post-translational modification N4-methylasparagine. Residue C81 coordinates (2R,3E)-phycocyanobilin.

It belongs to the phycobiliprotein family. As to quaternary structure, heterohexamer of two alpha chains, one alpha-B chain and three beta chains. In terms of processing, contains one covalently linked phycocyanobilin chromophore. The chromophore is added by phycocyanobilin lyase CpcS 1.

The protein localises to the cellular thylakoid membrane. In terms of biological role, light-harvesting photosynthetic bile pigment-protein from the phycobiliprotein complex. Allophycocyanin has a maximum absorption at approximately 650 to 653 nanometers. In Nostoc sp. (strain PCC 7120 / SAG 25.82 / UTEX 2576), this protein is Allophycocyanin subunit alpha 1 (apcA1).